The following is a 309-amino-acid chain: tRNA pseudouridine synthase B (309 aa).

The active-site Nucleophile is the Asp39. Residues Leu229 to Phe306 form the PUA domain.

It belongs to the pseudouridine synthase TruB family. Type 1 subfamily.

The catalysed reaction is uridine(55) in tRNA = pseudouridine(55) in tRNA. In terms of biological role, responsible for synthesis of pseudouridine from uracil-55 in the psi GC loop of transfer RNAs. This is tRNA pseudouridine synthase B from Thermotoga petrophila (strain ATCC BAA-488 / DSM 13995 / JCM 10881 / RKU-1).